A 316-amino-acid chain; its full sequence is MLLSSIAQHLKLPFFGEDLELDSMNELALSLPSQLTFAINKKYSQELESSKSKAFLIIDTLVENLPKESSYIICPDVSISMAQATKLFNKRPIEPQLPSATIGEGSMIDSMVRVENGTCIGSNVIVMAGAYIGANCVIGDDTTIYPNVTIYRDTIIGKECIIHAGVVIGADGFGFSHTKEGEHIKIYQNGNVIIEDCVEIGANCAIDRAVFNSTIIRRGTKLDNFIHIAHNCDIGEHSIFVAQTGVGGSTKLGRNCVVSGQSAFSDHLNIAPFSTFSARSGVTKSIEKSGGVYSGFPLMNHKEWKRLQVKIARLND.

Residue His-230 is the Proton acceptor of the active site.

This sequence belongs to the transferase hexapeptide repeat family. LpxD subfamily. As to quaternary structure, homotrimer.

The catalysed reaction is a UDP-3-O-[(3R)-3-hydroxyacyl]-alpha-D-glucosamine + a (3R)-hydroxyacyl-[ACP] = a UDP-2-N,3-O-bis[(3R)-3-hydroxyacyl]-alpha-D-glucosamine + holo-[ACP] + H(+). Its pathway is bacterial outer membrane biogenesis; LPS lipid A biosynthesis. Catalyzes the N-acylation of UDP-3-O-acylglucosamine using 3-hydroxyacyl-ACP as the acyl donor. Is involved in the biosynthesis of lipid A, a phosphorylated glycolipid that anchors the lipopolysaccharide to the outer membrane of the cell. This is UDP-3-O-acylglucosamine N-acyltransferase 2 from Sulfurimonas denitrificans (strain ATCC 33889 / DSM 1251) (Thiomicrospira denitrificans (strain ATCC 33889 / DSM 1251)).